Consider the following 286-residue polypeptide: Ribosomal RNA small subunit methyltransferase A (286 aa).

His11, Leu13, Gly44, Glu65, Asp90, and Asn115 together coordinate S-adenosyl-L-methionine.

This sequence belongs to the class I-like SAM-binding methyltransferase superfamily. rRNA adenine N(6)-methyltransferase family. RsmA subfamily.

The protein localises to the cytoplasm. It catalyses the reaction adenosine(1518)/adenosine(1519) in 16S rRNA + 4 S-adenosyl-L-methionine = N(6)-dimethyladenosine(1518)/N(6)-dimethyladenosine(1519) in 16S rRNA + 4 S-adenosyl-L-homocysteine + 4 H(+). Functionally, specifically dimethylates two adjacent adenosines (A1518 and A1519) in the loop of a conserved hairpin near the 3'-end of 16S rRNA in the 30S particle. May play a critical role in biogenesis of 30S subunits. The protein is Ribosomal RNA small subunit methyltransferase A of Nostoc punctiforme (strain ATCC 29133 / PCC 73102).